The following is a 658-amino-acid chain: Glycogen debranching enzyme (658 aa).

D336 serves as the catalytic Nucleophile. The Proton donor role is filled by E371. The tract at residues 459–484 (EANGEENRDGTNSNYSDNHGKEGLGG) is disordered.

The protein belongs to the glycosyl hydrolase 13 family.

The enzyme catalyses Hydrolysis of (1-&gt;6)-alpha-D-glucosidic linkages to branches with degrees of polymerization of three or four glucose residues in limit dextrin.. The protein operates within glycan degradation; glycogen degradation. Functionally, removes maltotriose and maltotetraose chains that are attached by 1,6-alpha-linkage to the limit dextrin main chain, generating a debranched limit dextrin. This chain is Glycogen debranching enzyme, found in Salmonella paratyphi B (strain ATCC BAA-1250 / SPB7).